The sequence spans 217 residues: NAD(P)H-quinone oxidoreductase subunit M, chloroplastic (217 aa).

The transit peptide at 1 to 21 (MVAAFSYTACTKLSLLHPSMV) directs the protein to the chloroplast. The segment at 48-67 (ETETLKEEQSTEKMKKQPTP) is disordered. Basic and acidic residues predominate over residues 50–62 (ETLKEEQSTEKMK).

The protein belongs to the NDH complex subunit M family. In terms of assembly, part of the chloroplast NDH complex, composed of a mixture of chloroplast and nucleus encoded subunits. Component of the NDH subcomplex A, at least composed of ndhH, ndhI, ndhJ, ndhK, ndhL, ndhM, ndhN and ndhO.

The protein resides in the plastid. It is found in the chloroplast thylakoid membrane. The enzyme catalyses a plastoquinone + NADH + (n+1) H(+)(in) = a plastoquinol + NAD(+) + n H(+)(out). The catalysed reaction is a plastoquinone + NADPH + (n+1) H(+)(in) = a plastoquinol + NADP(+) + n H(+)(out). NDH shuttles electrons from NAD(P)H:plastoquinone, via FMN and iron-sulfur (Fe-S) centers, to quinones in the photosynthetic chain and possibly in a chloroplast respiratory chain. The immediate electron acceptor for the enzyme in this species is believed to be plastoquinone. Couples the redox reaction to proton translocation, and thus conserves the redox energy in a proton gradient. The polypeptide is NAD(P)H-quinone oxidoreductase subunit M, chloroplastic (Arabidopsis thaliana (Mouse-ear cress)).